The chain runs to 177 residues: Archaemetzincin (177 aa).

Position 129 (His129) interacts with Zn(2+). The active-site Proton acceptor is Glu130. Zn(2+) is bound by residues His133, His139, Cys140, Cys145, Cys164, and Cys167.

This sequence belongs to the peptidase M54 family. Monomer. The cofactor is Zn(2+).

Its function is as follows. Probable zinc metalloprotease whose natural substrate is unknown. The polypeptide is Archaemetzincin (Sulfolobus acidocaldarius (strain ATCC 33909 / DSM 639 / JCM 8929 / NBRC 15157 / NCIMB 11770)).